A 168-amino-acid chain; its full sequence is Protein GRE1 (168 aa).

The interval 1-168 is disordered; sequence MSNLLNKFAD…DDDSGNQGVW (168 aa). 2 stretches are compositionally biased toward basic and acidic residues: residues 8–20 and 27–43; these read FADK…HDER and DQTR…REFR. Composition is skewed to polar residues over residues 56-81 and 120-144; these read NQGN…GNDF and TSGQ…SNIG.

The protein localises to the cytoplasm. This chain is Protein GRE1 (GRE1), found in Saccharomyces cerevisiae (strain ATCC 204508 / S288c) (Baker's yeast).